The primary structure comprises 752 residues: Photosystem I P700 chlorophyll a apoprotein A1 (752 aa).

8 consecutive transmembrane segments (helical) span residues 73–96 (IFSA…FHGA), 159–182 (LYWI…FHYH), 198–222 (MNHH…HVAL), 294–312 (IAHH…GHMY), 349–372 (WHAQ…HHMY), 388–414 (LSLF…IFMV), 436–458 (SIIA…FYIH), and 533–551 (FMVH…LILL). Residues C575 and C584 each contribute to the [4Fe-4S] cluster site. Transmembrane regions (helical) follow at residues 591 to 612 (HVFL…HFSW) and 666 to 688 (ASAY…MFLF). H677 contributes to the chlorophyll a' binding site. Chlorophyll a contacts are provided by M685 and Y693. W694 provides a ligand contact to phylloquinone. A helical transmembrane segment spans residues 726–746 (AVGLAHYLLGGIGTTWAFFLA).

The protein belongs to the PsaA/PsaB family. As to quaternary structure, the PsaA/B heterodimer binds the P700 chlorophyll special pair and subsequent electron acceptors. PSI consists of a core antenna complex that captures photons, and an electron transfer chain that converts photonic excitation into a charge separation. The eukaryotic PSI reaction center is composed of at least 11 subunits. Requires P700 is a chlorophyll a/chlorophyll a' dimer, A0 is one or more chlorophyll a, A1 is one or both phylloquinones and FX is a shared 4Fe-4S iron-sulfur center. as cofactor.

Its subcellular location is the plastid. It is found in the chloroplast thylakoid membrane. The catalysed reaction is reduced [plastocyanin] + hnu + oxidized [2Fe-2S]-[ferredoxin] = oxidized [plastocyanin] + reduced [2Fe-2S]-[ferredoxin]. Its function is as follows. PsaA and PsaB bind P700, the primary electron donor of photosystem I (PSI), as well as the electron acceptors A0, A1 and FX. PSI is a plastocyanin/cytochrome c6-ferredoxin oxidoreductase, converting photonic excitation into a charge separation, which transfers an electron from the donor P700 chlorophyll pair to the spectroscopically characterized acceptors A0, A1, FX, FA and FB in turn. Oxidized P700 is reduced on the lumenal side of the thylakoid membrane by plastocyanin or cytochrome c6. The polypeptide is Photosystem I P700 chlorophyll a apoprotein A1 (Phaeodactylum tricornutum (strain CCAP 1055/1)).